Here is a 476-residue protein sequence, read N- to C-terminus: Bifunctional protein GlmU (476 aa).

A pyrophosphorylase region spans residues 1–232; that stretch reads MDNLAAIILA…PVEVMGINDR (232 aa). Residues 9–12, Lys-23, Gln-75, and 80–81 each bind UDP-N-acetyl-alpha-D-glucosamine; these read LAAG and GT. Asp-105 is a Mg(2+) binding site. Residues Gly-142, Glu-157, Asn-172, and Asn-230 each contribute to the UDP-N-acetyl-alpha-D-glucosamine site. Residue Asn-230 coordinates Mg(2+). A linker region spans residues 233–253; the sequence is VQLAEAARHARRRIAEEHMLN. Positions 254–476 are N-acetyltransferase; the sequence is GVTLVDPAAT…EGWKLRKRDQ (223 aa). UDP-N-acetyl-alpha-D-glucosamine is bound by residues Arg-353 and Lys-371. The active-site Proton acceptor is the His-383. Positions 386 and 397 each coordinate UDP-N-acetyl-alpha-D-glucosamine. Acetyl-CoA is bound by residues 406–407, Ser-425, Ala-443, and Arg-460; that span reads NY.

In the N-terminal section; belongs to the N-acetylglucosamine-1-phosphate uridyltransferase family. The protein in the C-terminal section; belongs to the transferase hexapeptide repeat family. As to quaternary structure, homotrimer. Mg(2+) is required as a cofactor.

It is found in the cytoplasm. It carries out the reaction alpha-D-glucosamine 1-phosphate + acetyl-CoA = N-acetyl-alpha-D-glucosamine 1-phosphate + CoA + H(+). It catalyses the reaction N-acetyl-alpha-D-glucosamine 1-phosphate + UTP + H(+) = UDP-N-acetyl-alpha-D-glucosamine + diphosphate. The protein operates within nucleotide-sugar biosynthesis; UDP-N-acetyl-alpha-D-glucosamine biosynthesis; N-acetyl-alpha-D-glucosamine 1-phosphate from alpha-D-glucosamine 6-phosphate (route II): step 2/2. It participates in nucleotide-sugar biosynthesis; UDP-N-acetyl-alpha-D-glucosamine biosynthesis; UDP-N-acetyl-alpha-D-glucosamine from N-acetyl-alpha-D-glucosamine 1-phosphate: step 1/1. Its pathway is bacterial outer membrane biogenesis; LPS lipid A biosynthesis. Functionally, catalyzes the last two sequential reactions in the de novo biosynthetic pathway for UDP-N-acetylglucosamine (UDP-GlcNAc). The C-terminal domain catalyzes the transfer of acetyl group from acetyl coenzyme A to glucosamine-1-phosphate (GlcN-1-P) to produce N-acetylglucosamine-1-phosphate (GlcNAc-1-P), which is converted into UDP-GlcNAc by the transfer of uridine 5-monophosphate (from uridine 5-triphosphate), a reaction catalyzed by the N-terminal domain. The chain is Bifunctional protein GlmU from Geobacter sulfurreducens (strain ATCC 51573 / DSM 12127 / PCA).